The sequence spans 113 residues: Large ribosomal subunit protein bL17 (113 aa).

This sequence belongs to the bacterial ribosomal protein bL17 family. Part of the 50S ribosomal subunit. Contacts protein L32.

The chain is Large ribosomal subunit protein bL17 from Clostridium beijerinckii (strain ATCC 51743 / NCIMB 8052) (Clostridium acetobutylicum).